The following is a 62-amino-acid chain: Ranacyclin-T (62 aa).

The N-terminal stretch at 1 to 22 is a signal peptide; sequence MFTMKKTLLVLFFLGVVSLSLC. Positions 23 to 43 are excised as a propeptide; the sequence is VEERDADEEDGGEVMEEEVKR. Cysteines 49 and 59 form a disulfide. Position 60 is a lysine amide (K60).

Belongs to the frog skin active peptide (FSAP) family. Brevinin subfamily. As to expression, expressed by the skin granular glands.

It localises to the secreted. Has antibacterial activity against Gram-positive bacteria B.megaterium Bm11, S.lentus and M.luteus, and Gram-negative bacteria E.coli D22, Y.pseudotuberculosis YP III and P.syringae pv tabaci, and antifungal activity against C.albicans ATCC 10231, C.tropicalis, C.guiller-mondii and P.nicotianae spores. Has weak hemolytic activity. The mature peptide inserts into the hydrophobic core of the bacterial cell membrane and increases permeability without disrupting membrane integrity. Probably binds to the outer membrane surface before aggregating to form transmembrane pores. The protein is Ranacyclin-T (RNCT) of Rana temporaria (European common frog).